The following is a 275-amino-acid chain: Transcriptional coregulator psa-3 (275 aa).

Residues 91–161 (TDDIKRLFQS…RRTVCHEALV (71 aa)) enclose the MEIS N-terminal domain. The tract at residues 239–275 (QLPPNFLKPSNEKSPEKSEEEKSQKPSSSPKSPSLSD) is disordered. The span at 248–262 (SNEKSPEKSEEEKSQ) shows a compositional bias: basic and acidic residues. The span at 263–275 (KPSSSPKSPSLSD) shows a compositional bias: low complexity.

As to quaternary structure, interacts with homeobox protein ceh-20; the interaction is direct, facilitates nuclear localization of ceh-20 and may stabilize interaction of a ceh-20-nob-1 complex with DNA.

It is found in the nucleus. Functionally, probable transcription coregulator. Required for asymmetric cell divisions of the T hypodermal cells, and cell fate determination, in concert with homeobox proteins nob-1 and ceh-20. Acts downstream of the Wnt signaling pathway, and of ceh-20 and nob-1. The protein is Transcriptional coregulator psa-3 of Caenorhabditis elegans.